A 176-amino-acid polypeptide reads, in one-letter code: ATP synthase subunit b (176 aa).

A helical membrane pass occupies residues 14–34 (STTLGTMIVVSGAFLILMLLL).

It belongs to the ATPase B chain family. In terms of assembly, F-type ATPases have 2 components, F(1) - the catalytic core - and F(0) - the membrane proton channel. F(1) has five subunits: alpha(3), beta(3), gamma(1), delta(1), epsilon(1). F(0) has three main subunits: a(1), b(2) and c(10-14). The alpha and beta chains form an alternating ring which encloses part of the gamma chain. F(1) is attached to F(0) by a central stalk formed by the gamma and epsilon chains, while a peripheral stalk is formed by the delta and b chains.

The protein resides in the cell membrane. Its function is as follows. F(1)F(0) ATP synthase produces ATP from ADP in the presence of a proton or sodium gradient. F-type ATPases consist of two structural domains, F(1) containing the extramembraneous catalytic core and F(0) containing the membrane proton channel, linked together by a central stalk and a peripheral stalk. During catalysis, ATP synthesis in the catalytic domain of F(1) is coupled via a rotary mechanism of the central stalk subunits to proton translocation. Component of the F(0) channel, it forms part of the peripheral stalk, linking F(1) to F(0). The chain is ATP synthase subunit b from Enterococcus faecalis (strain ATCC 700802 / V583).